The primary structure comprises 501 residues: Aspartyl/glutamyl-tRNA(Asn/Gln) amidotransferase subunit B (501 aa).

Belongs to the GatB/GatE family. GatB subfamily. Heterotrimer of A, B and C subunits.

The catalysed reaction is L-glutamyl-tRNA(Gln) + L-glutamine + ATP + H2O = L-glutaminyl-tRNA(Gln) + L-glutamate + ADP + phosphate + H(+). The enzyme catalyses L-aspartyl-tRNA(Asn) + L-glutamine + ATP + H2O = L-asparaginyl-tRNA(Asn) + L-glutamate + ADP + phosphate + 2 H(+). Functionally, allows the formation of correctly charged Asn-tRNA(Asn) or Gln-tRNA(Gln) through the transamidation of misacylated Asp-tRNA(Asn) or Glu-tRNA(Gln) in organisms which lack either or both of asparaginyl-tRNA or glutaminyl-tRNA synthetases. The reaction takes place in the presence of glutamine and ATP through an activated phospho-Asp-tRNA(Asn) or phospho-Glu-tRNA(Gln). The protein is Aspartyl/glutamyl-tRNA(Asn/Gln) amidotransferase subunit B of Agrobacterium fabrum (strain C58 / ATCC 33970) (Agrobacterium tumefaciens (strain C58)).